The following is a 305-amino-acid chain: tRNA dimethylallyltransferase (305 aa).

Residue 13 to 20 coordinates ATP; the sequence is GPTSSGKT. 15–20 is a substrate binding site; the sequence is TSSGKT. Residues 39-42 are interaction with substrate tRNA; sequence DSKQ.

Belongs to the IPP transferase family. In terms of assembly, monomer. Mg(2+) serves as cofactor.

It carries out the reaction adenosine(37) in tRNA + dimethylallyl diphosphate = N(6)-dimethylallyladenosine(37) in tRNA + diphosphate. Its function is as follows. Catalyzes the transfer of a dimethylallyl group onto the adenine at position 37 in tRNAs that read codons beginning with uridine, leading to the formation of N6-(dimethylallyl)adenosine (i(6)A). The chain is tRNA dimethylallyltransferase from Neorickettsia sennetsu (strain ATCC VR-367 / Miyayama) (Ehrlichia sennetsu).